Here is a 177-residue protein sequence, read N- to C-terminus: Bifunctional protein PyrR (177 aa).

A PRPP-binding motif is present at residues 99 to 111 (LVLIDDVIYKGRT).

The protein belongs to the purine/pyrimidine phosphoribosyltransferase family. PyrR subfamily.

The enzyme catalyses UMP + diphosphate = 5-phospho-alpha-D-ribose 1-diphosphate + uracil. Its function is as follows. Regulates the transcription of the pyrimidine nucleotide (pyr) operon in response to exogenous pyrimidines. Functionally, also displays a weak uracil phosphoribosyltransferase activity which is not physiologically significant. This is Bifunctional protein PyrR from Picosynechococcus sp. (strain ATCC 27264 / PCC 7002 / PR-6) (Agmenellum quadruplicatum).